The following is a 463-amino-acid chain: Major capsid protein (463 aa).

Residues 1–24 (MTIEKNLSDVQQKYADQFQEDVVK) constitute a propeptide that is removed on maturation.

Its subcellular location is the virion. Assembles to form an icosahedral capsid. This chain is Major capsid protein, found in Staphylococcus phage K.